A 110-amino-acid polypeptide reads, in one-letter code: MAHSAPLGLLEQGCPIQVEHDRKRRQFTVRLNGCHDRAVLLYEYVGKRIVDLQHTEVPDAYRGRGIAKHLAKAALDFVVEEDLKAHLTCWYIQKYVKENPLPQYLEHLQP.

An N-acetyltransferase domain is found at 19–109; the sequence is EHDRKRRQFT…PLPQYLEHLQ (91 aa).

The protein belongs to the NATD1 family.

This is Protein NATD1 (NATD1) from Gallus gallus (Chicken).